The primary structure comprises 595 residues: Parathyroid hormone/parathyroid hormone-related peptide receptor (595 aa).

The signal sequence occupies residues 1 to 28; sequence MGAVRIAPGLALLLCCPVLSSAYALVDA. The Extracellular portion of the chain corresponds to 29–188; the sequence is DDVMTKEEQI…REREVFDRLG (160 aa). Intrachain disulfides connect cysteine 48-cysteine 117, cysteine 108-cysteine 148, and cysteine 131-cysteine 170. The segment at 66-103 is disordered; the sequence is DKGWASASTSGKPKKEKASGKLYPESEEDKEVPTGSRH. 4 N-linked (GlcNAc...) asparagine glycosylation sites follow: asparagine 151, asparagine 161, asparagine 166, and asparagine 176. Residues 189-209 traverse the membrane as a helical segment; it reads MIYTVGYSVSLASLTVAVLIL. Residues 210 to 223 are Cytoplasmic-facing; that stretch reads AYFRRLHCTRNYIH. The chain crosses the membrane as a helical span at residues 224-244; the sequence is MHLFLSFMLRAVSIFVKDAVL. Over 245 to 294 the chain is Extracellular; sequence YSGATLDEAERLTEEELRAIAQAPPPPTAAAGYAGCRVAVTFFLYFLATN. The helical transmembrane segment at 295–315 threads the bilayer; the sequence is YYWILVEGLYLHSLIFMAFFS. Residues 316-318 are Cytoplasmic-facing; it reads EKK. The chain crosses the membrane as a helical span at residues 319-339; that stretch reads YLWGFTVFGWGLPAVFVAVWV. Topologically, residues 340 to 360 are extracellular; the sequence is SVRATLANTGCWDLSSGNKKW. A helical transmembrane segment spans residues 361-381; sequence IIQVPILASIVLNFILFINIV. Residues 382 to 404 are Cytoplasmic-facing; that stretch reads RVLATKLRETNAGRCDTRQQYRK. A helical membrane pass occupies residues 405-425; it reads LLKSTLVLMPLFGVHYIVFMA. Residues 426-439 are Extracellular-facing; that stretch reads TPYTEVSGTLWQVQ. The helical transmembrane segment at 440–460 threads the bilayer; sequence MHYEMLFNSFQGFFVAIIYCF. At 461–595 the chain is on the cytoplasmic side; sequence CNGEVQAEIK…LLQEEWETVM (135 aa). The short motif at 473 to 476 is the Important for interaction with G proteins element; it reads WSRW. Residues 528 to 595 are disordered; sequence TTTATTNGHP…LLQEEWETVM (68 aa). Positions 547–559 are enriched in low complexity; sequence APTLPATPPATAA. Threonine 553 bears the Phosphothreonine mark.

It belongs to the G-protein coupled receptor 2 family. Homodimer in the absence of bound ligand. Peptide hormone binding leads to dissociation of the homodimer. In terms of processing, N-glycosylated. High levels in the kidney, with much lower levels in aorta, heart, lung, prostate, testis, and skeletal muscle.

The protein localises to the cell membrane. Functionally, G-protein-coupled receptor for parathyroid hormone (PTH) and for parathyroid hormone-related peptide (PTHLH). Ligand binding causes a conformation change that triggers signaling via guanine nucleotide-binding proteins (G proteins) and modulates the activity of downstream effectors, such as adenylate cyclase (cAMP). PTH1R is coupled to G(s) G alpha proteins and mediates activation of adenylate cyclase activity. PTHLH dissociates from PTH1R more rapidly than PTH; as consequence, the cAMP response induced by PTHLH decays faster than the response induced by PTH. In Canis lupus familiaris (Dog), this protein is Parathyroid hormone/parathyroid hormone-related peptide receptor (PTH1R).